Here is a 414-residue protein sequence, read N- to C-terminus: Imidazolonepropionase (414 aa).

Positions 73 and 75 each coordinate Fe(3+). The Zn(2+) site is built by H73 and H75. Residues R82, Y145, and H178 each contribute to the 4-imidazolone-5-propanoate site. Position 145 (Y145) interacts with N-formimidoyl-L-glutamate. Residue H249 coordinates Fe(3+). H249 serves as a coordination point for Zn(2+). Position 252 (Q252) interacts with 4-imidazolone-5-propanoate. Fe(3+) is bound at residue D324. D324 lines the Zn(2+) pocket. Residues N326 and G328 each coordinate N-formimidoyl-L-glutamate. Residue S329 coordinates 4-imidazolone-5-propanoate.

Belongs to the metallo-dependent hydrolases superfamily. HutI family. Zn(2+) serves as cofactor. The cofactor is Fe(3+).

The protein resides in the cytoplasm. The catalysed reaction is 4-imidazolone-5-propanoate + H2O = N-formimidoyl-L-glutamate. It participates in amino-acid degradation; L-histidine degradation into L-glutamate; N-formimidoyl-L-glutamate from L-histidine: step 3/3. Catalyzes the hydrolytic cleavage of the carbon-nitrogen bond in imidazolone-5-propanoate to yield N-formimidoyl-L-glutamate. It is the third step in the universal histidine degradation pathway. This Shewanella denitrificans (strain OS217 / ATCC BAA-1090 / DSM 15013) protein is Imidazolonepropionase.